The following is a 127-amino-acid chain: MSKLRFTTDHEWLRQDDDGLLTVGITAYAQDALGDVVFVQLPELGEHAAGSEVAVLESVKAASNILMPLDGEVVAINDALPDAPELVNQDPLGEAWFFRFRPADAGAWEKLLDQAAYDRLLNANADA.

Residues 20-101 form the Lipoyl-binding domain; it reads LLTVGITAYA…LGEAWFFRFR (82 aa). N6-lipoyllysine is present on lysine 60.

It belongs to the GcvH family. As to quaternary structure, the glycine cleavage system is composed of four proteins: P, T, L and H. Requires (R)-lipoate as cofactor.

Functionally, the glycine cleavage system catalyzes the degradation of glycine. The H protein shuttles the methylamine group of glycine from the P protein to the T protein. In Pseudomonas aeruginosa (strain ATCC 15692 / DSM 22644 / CIP 104116 / JCM 14847 / LMG 12228 / 1C / PRS 101 / PAO1), this protein is Glycine cleavage system H protein 1.